Consider the following 195-residue polypeptide: Calcium channel flower (195 aa).

3 consecutive transmembrane segments (helical) span residues 34 to 54 (LLGIVAAFFAILFGLWNVISI), 66 to 88 (IIQMVAGFVVMLLEAPCCFVCIE), and 117 to 137 (IFMCFGLASLFGSGLIFATGV).

This sequence belongs to the calcium channel flower family. As to quaternary structure, homomultimer. Associates with the dally/ magu complex.

Its subcellular location is the cell membrane. It localises to the cytoplasmic vesicle. It is found in the secretory vesicle. The protein localises to the synaptic vesicle membrane. The protein resides in the presynaptic cell membrane. Its subcellular location is the endosome. With respect to regulation, channel activity is inhibited by La(3+), which reduces Ca(2+) influx and thus inhibits it's function in promoting activity-dependent bulk endocytosis (ADBE) in response to high stimuli. In terms of biological role, transmembrane protein which mediates synaptic endocytosis, fitness-based cell culling, neuronal culling, morphogen gradient scaling, and calcium transport. Regulates synaptic endocytosis and hence couples exo- with endocytosis. Controls two major modes of synaptic vesicle (SV) endocytosis in the synaptic boutons of neuromuscular junctions (NMJs); Ca(2+) channel-independent Clathrin-mediated endocytosis (CME) in response to mild stimulation, and Ca(2+) channel-dependent activity-dependent bulk endocytosis (ADBE) in response to strong stimulation. Functions in ADBE and subsequent SV reformation from bulk endosomes by initiating Ca(2+) channel-dependent phosphatidylinositol 4,5-bisphosphate (PtdIns(4,5)P2) compartmentalization in synaptic boutons. There it acts at the periactive zone to provide the low Ca(2+) levels required to initiate Calcineurin activation and upregulate PtdIns(4,5)P2. Conversely PtdIns(4,5)P2 enhances fwe Ca(2+) channel-activity, establishing a positive feedback loop that induces PtdIns(4,5)P2 microdomain at the periactive zone. These microdomains trigger bulk membrane invagination (i.e. ADBE) by triggering actin polymerization while also promoting localization of fwe to bulk endosomes, thereby removing the ADBE trigger to reduce endocytosis and prevent excess membrane uptake. PtdIns(4,5)P2 then promotes SV reformation from the bulk endosomes, to coordinate ADBE and subsequent SV reformation. Different combinations of the flower isoforms at the cell membrane are also required for the identification and elimination of suboptimal or supernumerary cells during development, regeneration, and adulthood. Required for the recognition and elimination of unfit cells in the developing wing during cell competition. In the developing pupal retina, mediates the elimination of unwanted postmitotic neurons, including supernumerary photoreceptor neurons that form at the periphery of the retina and are contained within incomplete ommatidia units. Also required for efficient elimination and replacement of old neurons by newly generated neurons during regeneration in the adult brain following mechanical injury. Downstream of the flower fitness fingerprints, cells identified as unwanted or unfit are eliminated via apoptosis through the expression of ahuizotl (azot). However, the cells marked for elimination by the flower isoforms only undergo apoptosis if additional thresholds are met; (1) their neighboring fit/healthy cells express different levels of the fwe isoforms, and (2) the levels of the protective signal SPARC expressed by the loser or unwanted cells are unable to inhibit caspase activation. These additional thresholds for flower-mediated apoptosis, allows useful cells to recover from transient and limited stress before they are unnecessarily eliminated. Functions with dally and magu in a mechanism of scaling, which utilises apoptosis to ensure that the dpp morphogen gradient, which mediates organ growth, remains proportional to the size of the growing wing. In this mechanism, fwe represses dally- and Magu-dependent activity in expanding the gradient, and dally/Magu inhibits fwe-dependent apoptosis to keep cell death rate low. When the levels of these different proteins are optimally regulated the gradient correctly scales with organ growth but when this fails, fwe-mediated apoptosis is activated to trim the developing tissue to match the correct size of the gradient. In Drosophila ananassae (Fruit fly), this protein is Calcium channel flower.